A 368-amino-acid chain; its full sequence is Biglycan (368 aa).

Residues 1 to 16 form the signal peptide; sequence MKVLLLLCSCILVIHA. Positions 17–37 are excised as a propeptide; sequence LPFEQRGFWDFSMDDGMAMMK. 2 disulfide bridges follow: Cys63–Cys69 and Cys67–Cys76. LRR repeat units lie at residues 82-102, 103-126, 127-150, 151-171, 172-195, 196-220, 221-241, 242-265, 266-289, 290-312, 313-342, and 343-368; these read TSIP…NNKI, TEIK…NNKI, SKIN…KNNL, EEIP…ENKI, KKVP…GNPL, ENGG…EAKL, SGIP…NNKI, QAIE…HNNI, RMIE…NNKL, SKVP…SNNI, TQVG…NNPV, and PYWE…NYRK. N-linked (GlcNAc...) asparagine glycosylation is found at Asn270 and Asn311. Cys321 and Cys354 are oxidised to a cystine.

The protein belongs to the small leucine-rich proteoglycan (SLRP) family. SLRP class I subfamily.

It localises to the secreted. Its subcellular location is the extracellular space. It is found in the extracellular matrix. Functionally, may be involved in collagen fiber assembly. The polypeptide is Biglycan (bgn) (Xenopus laevis (African clawed frog)).